A 149-amino-acid chain; its full sequence is Transcription factor bHLH153 (149 aa).

Positions 27 to 76 constitute a bHLH domain; the sequence is RHKSDLSFSSKERKDKVGERISALQQIVSPYGKTDTASVLLDAMHYIEFL.

The protein belongs to the bHLH protein family.

Its subcellular location is the nucleus. The chain is Transcription factor bHLH153 from Arabidopsis thaliana (Mouse-ear cress).